We begin with the raw amino-acid sequence, 821 residues long: uncharacterized protein (821 aa).

Disordered regions lie at residues 1–20 (MGQTNSRHSLIETDEPTTSS), 55–96 (SENY…EAYS), 134–205 (SYDF…NNEH), 240–263 (RLHQSPSPIPNSNDNDSQTRRSSW), 274–293 (PEEFPNASNPEAHSNFTPLN), 360–381 (NVLQNSSQNGNDQISSDPESNS), 430–450 (TSEDHAPTMTQENQSLHNESR), 467–497 (EFSTDLPPTFERSNSTFSHPEPTRSDFSQAF), 512–535 (RNLFPTSNSGNQSTSSFSRYNQPT), and 549–641 (AQEP…SNQT). Polar residues-rich tracts occupy residues 58–88 (YADTPSRNTPNSSNGFPSETLVTSSAHCSTQ) and 185–203 (SLPSNSNSTYTTPLQSINN). Residues 279-293 (NASNPEAHSNFTPLN) show a composition bias toward polar residues. Over residues 437–450 (TMTQENQSLHNESR) the composition is skewed to polar residues. Low complexity-rich tracts occupy residues 517–529 (TSNSGNQSTSSFS) and 568–578 (SSLLDSSNSNS). Residues 579–622 (QRPFSTVPSESNVFSRNASGNFSMSQTHQPTTDNTSSFSTQPGR) show a composition bias toward polar residues. An RING-type; atypical zinc finger spans residues 766–809 (CLICLETYTNGDICRKLQACKHFFHQACIDQWLTTGNNSCPLCR).

This is an uncharacterized protein from Schizosaccharomyces pombe (strain 972 / ATCC 24843) (Fission yeast).